Reading from the N-terminus, the 116-residue chain is Large ribosomal subunit protein uL18 (116 aa).

This sequence belongs to the universal ribosomal protein uL18 family. In terms of assembly, part of the 50S ribosomal subunit; part of the 5S rRNA/L5/L18/L25 subcomplex. Contacts the 5S and 23S rRNAs.

Its function is as follows. This is one of the proteins that bind and probably mediate the attachment of the 5S RNA into the large ribosomal subunit, where it forms part of the central protuberance. The chain is Large ribosomal subunit protein uL18 from Shewanella denitrificans (strain OS217 / ATCC BAA-1090 / DSM 15013).